We begin with the raw amino-acid sequence, 314 residues long: Ribosomal RNA small subunit methyltransferase H (314 aa).

S-adenosyl-L-methionine is bound by residues 33–35 (GGH), aspartate 52, phenylalanine 84, aspartate 105, and glutamine 112.

The protein belongs to the methyltransferase superfamily. RsmH family.

The protein resides in the cytoplasm. It carries out the reaction cytidine(1402) in 16S rRNA + S-adenosyl-L-methionine = N(4)-methylcytidine(1402) in 16S rRNA + S-adenosyl-L-homocysteine + H(+). In terms of biological role, specifically methylates the N4 position of cytidine in position 1402 (C1402) of 16S rRNA. This Lactobacillus delbrueckii subsp. bulgaricus (strain ATCC 11842 / DSM 20081 / BCRC 10696 / JCM 1002 / NBRC 13953 / NCIMB 11778 / NCTC 12712 / WDCM 00102 / Lb 14) protein is Ribosomal RNA small subunit methyltransferase H.